Here is an 870-residue protein sequence, read N- to C-terminus: Ribonucleoside-diphosphate reductase large subunit (870 aa).

One can recognise an ATP-cone domain in the interval 16-110 (MYVVKRDGTK…VSNLHKQTSK (95 aa)). Residues 20 to 21 (KR), 26 to 32 (ENVSFDK), T71, and D75 each bind ATP. S235 is a binding site for GDP. A disulfide bond links C236 and C463. DTTP-binding positions include 244–246 (DSI), K261, R274, and 281–282 (RG). N446 contributes to the GDP binding site. Catalysis depends on N446, which acts as the Proton acceptor. The active-site Cysteine radical intermediate is the C448. GDP-binding positions include E450 and 632 to 635 (TAST). Catalysis depends on E450, which acts as the Proton acceptor. The segment at 789-854 (KPVENNINST…NNNEDDLANY (66 aa)) is disordered. Over residues 796 to 811 (NSTTPLKTPTKTPNSS) the composition is skewed to low complexity. A compositionally biased stretch (polar residues) spans 812–831 (NRISTSPTNNLTSPIRFNIT). Low complexity predominate over residues 832 to 844 (QQQQQQQQQQQQQ).

The protein belongs to the ribonucleoside diphosphate reductase large chain family. In terms of assembly, heterodimer of a large and a small subunit.

It is found in the cytoplasm. The catalysed reaction is a 2'-deoxyribonucleoside 5'-diphosphate + [thioredoxin]-disulfide + H2O = a ribonucleoside 5'-diphosphate + [thioredoxin]-dithiol. Under complex allosteric control mediated by deoxynucleoside triphosphates and ATP binding to separate specificity and activation sites on the large subunit. The type of nucleotide bound at the specificity site determines substrate preference. It seems probable that ATP makes the enzyme reduce CDP and UDP, dGTP favors ADP reduction and dTTP favors GDP reduction. Stimulated by ATP and inhibited by dATP binding to the activity site. In terms of biological role, provides the precursors necessary for DNA synthesis. Catalyzes the biosynthesis of deoxyribonucleotides from the corresponding ribonucleotides. This chain is Ribonucleoside-diphosphate reductase large subunit (rnrA), found in Dictyostelium discoideum (Social amoeba).